The chain runs to 226 residues: Ornithine decarboxylase antizyme (226 aa).

This sequence belongs to the ODC antizyme family. In terms of assembly, interacts with ODC and thereby sterically blocks ODC homodimerization.

Functionally, ornithine decarboxylase (ODC) antizyme protein that negatively regulates ODC activity and intracellular polyamine biosynthesis in response to increased intracellular polyamine levels. Binds to ODC monomers, inhibiting the assembly of the functional ODC homodimer, and targets the monomers for ubiquitin-independent proteolytic destruction by the 26S proteasome. This is Ornithine decarboxylase antizyme (spa1) from Schizosaccharomyces pombe (strain 972 / ATCC 24843) (Fission yeast).